Consider the following 581-residue polypeptide: Phosphoinositide phospholipase C 2 (581 aa).

The 77-residue stretch at 26-102 (EIKTIFEKYS…NPPLALHKVH (77 aa)) folds into the EF-hand-like domain. Residues 103–248 (HDMDAPISHY…LKRRIIISTK (146 aa)) form the PI-PLC X-box domain. Active-site residues include histidine 118 and histidine 164. The tract at residues 279 to 314 (PSFIQRNKSEAKDDLDGNDDDDDDDDEDKSKINAPP) is disordered. The segment covering 294–305 (DGNDDDDDDDDE) has biased composition (acidic residues). One can recognise a PI-PLC Y-box domain in the interval 317–433 (KHLIAIHAGK…GYIKKPDLLL (117 aa)). The region spanning 434–563 (KSGSDSDIFD…EGIRAFPLHS (130 aa)) is the C2 domain.

The cofactor is Ca(2+). In terms of processing, phosphorylation level varies significantly during early response to bacterial elicitor. Expressed in roots, shoots, leaves and flowers.

It localises to the cell membrane. The catalysed reaction is a 1,2-diacyl-sn-glycero-3-phospho-(1D-myo-inositol-4,5-bisphosphate) + H2O = 1D-myo-inositol 1,4,5-trisphosphate + a 1,2-diacyl-sn-glycerol + H(+). Its function is as follows. The production of the second messenger molecules diacylglycerol (DAG) and inositol 1,4,5-trisphosphate (IP3) is mediated by activated phosphatidylinositol-specific phospholipase C enzymes. At physiological calcium concentration, the preferred substrate is phosphatidylinositol 4,5-bisphosphate versus phosphatidylinositol. The sequence is that of Phosphoinositide phospholipase C 2 (PLC2) from Arabidopsis thaliana (Mouse-ear cress).